Reading from the N-terminus, the 282-residue chain is Elongation factor Ts (282 aa).

The interval 80–83 (TDFV) is involved in Mg(2+) ion dislocation from EF-Tu.

It belongs to the EF-Ts family.

It localises to the cytoplasm. Functionally, associates with the EF-Tu.GDP complex and induces the exchange of GDP to GTP. It remains bound to the aminoacyl-tRNA.EF-Tu.GTP complex up to the GTP hydrolysis stage on the ribosome. The sequence is that of Elongation factor Ts from Protochlamydia amoebophila (strain UWE25).